The chain runs to 108 residues: Ig kappa chain V region K-25 (108 aa).

The tract at residues 1 to 23 (AVELTQTPASVEAAVGGTVTIKC) is framework-1. Positions 24–34 (QASQBIYSYLS) are complementarity-determining-1. Positions 35-49 (WYQQKPGQPPKLLIY) are framework-2. The tract at residues 50–56 (KASTLAS) is complementarity-determining-2. Residues 57-88 (GVSSRFKGSGSGTEFTLTISDLZCADAATYYC) form a framework-3 region. Positions 89 to 97 (QTYSYSSTY) are complementarity-determining-3. Residues 98–107 (FGGGTEVVVK) are framework-4.

The protein is Ig kappa chain V region K-25 of Oryctolagus cuniculus (Rabbit).